Here is a 377-residue protein sequence, read N- to C-terminus: DNA primase small subunit PriS (377 aa).

Residues aspartate 99, aspartate 101, and aspartate 274 contribute to the active site.

This sequence belongs to the eukaryotic-type primase small subunit family. Heterodimer of a small subunit (PriS) and a large subunit (PriL). The cofactor is Mg(2+). It depends on Mn(2+) as a cofactor.

Functionally, catalytic subunit of DNA primase, an RNA polymerase that catalyzes the synthesis of short RNA molecules used as primers for DNA polymerase during DNA replication. The small subunit contains the primase catalytic core and has DNA synthesis activity on its own. Binding to the large subunit stabilizes and modulates the activity, increasing the rate of DNA synthesis while decreasing the length of the DNA fragments, and conferring RNA synthesis capability. The DNA polymerase activity may enable DNA primase to also catalyze primer extension after primer synthesis. May also play a role in DNA repair. In Staphylothermus marinus (strain ATCC 43588 / DSM 3639 / JCM 9404 / F1), this protein is DNA primase small subunit PriS.